The following is a 431-amino-acid chain: MTVKAEAARSTLTYSRMRGMVAILIAFMKQRRMGLNDFIQKIASNTYACKHAEVQSILKMSHPQEPELMNANPSPPPSPSQQINLGPSSNPHAKPSDFHFLKVIGKGSFGKVLLARHKAEEVFYAVKVLQKKAILKKKEEKHIMSERNVLLKNVKHPFLVGLHFSFQTADKLYFVLDYINGGELFYHLQRERCFLEPRARFYAAEIASALGYLHSLNIVYRDLKPENILLDSQGHIVLTDFGLCKENIEHNGTTSTFCGTPEYLAPEVLHKQPYDRTVDWWCLGAVLYEMLYGLPPFYSRNTAEMYDNILNKPLQLKPNITNSARHLLEGLLQKDRTKRLGAKDDFMEIKSHIFFSLINWDDLINKKITPPFNPNVSGPSDLRHFDPEFTEEPVPSSIGRSPDSILVTASVKEAAEAFLGFSYAPPVDSFL.

Positions 1-60 (MTVKAEAARSTLTYSRMRGMVAILIAFMKQRRMGLNDFIQKIASNTYACKHAEVQSILKM) are necessary for localization to the mitochondria. The interval 65 to 92 (EPELMNANPSPPPSPSQQINLGPSSNPH) is disordered. S74 bears the Phosphoserine mark. A Phosphoserine; by MAPK7 modification is found at S78. The span at 81–91 (QQINLGPSSNP) shows a compositional bias: polar residues. The Protein kinase domain maps to 98–355 (FHFLKVIGKG…FMEIKSHIFF (258 aa)). Residues 104–112 (IGKGSFGKV) and K127 each bind ATP. The Nuclear localization signal motif lies at 131–141 (KKAILKKKEEK). The active-site Proton acceptor is the D222. A Phosphothreonine; by PDPK1 modification is found at T256. Residues 356-431 (SLINWDDLIN…SYAPPVDSFL (76 aa)) enclose the AGC-kinase C-terminal domain. Phosphothreonine; by PKA is present on T369. Residues S397, S401, and S422 each carry the phosphoserine modification.

Belongs to the protein kinase superfamily. AGC Ser/Thr protein kinase family. Homodimer; disulfide-linked. Interacts with MAPK3/ERK1, MAPK1/ERK2, MAP2K1/MEK1, MAP2K2/MEK2, NEDD4, NEDD4L, MAPT/TAU, MAPK7, CREB1, SLC9A3R2/NHERF2 and KCNJ1/ROMK1. Forms a trimeric complex with FBXW7 and NOTCH1 Associates with the mammalian target of rapamycin complex 2 (mTORC2) via an interaction with MAPKAP1/SIN1. Regulated by phosphorylation. Activated by phosphorylation on Ser-422 by mTORC2, transforming it into a substrate for PDPK1 which phosphorylates it on Thr-256. Phosphorylation on Ser-397 and Ser-401 are also essential for its activity. Phosphorylation on Ser-78 by MAPK7 is required for growth factor-induced cell cycle progression. In terms of processing, ubiquitinated by NEDD4L; which promotes proteasomal degradation. Ubiquitinated by SYVN1 at the endoplasmic reticulum; which promotes rapid proteasomal degradation and maintains a high turnover rate in resting cells.

The protein localises to the cytoplasm. It localises to the nucleus. Its subcellular location is the endoplasmic reticulum membrane. It is found in the cell membrane. The protein resides in the mitochondrion. The enzyme catalyses L-seryl-[protein] + ATP = O-phospho-L-seryl-[protein] + ADP + H(+). The catalysed reaction is L-threonyl-[protein] + ATP = O-phospho-L-threonyl-[protein] + ADP + H(+). Two specific sites, one in the kinase domain (Thr-256) and the other in the C-terminal regulatory region (Ser-422), need to be phosphorylated for its full activation. Phosphorylation at Ser-397 and Ser-401 are also essential for its activity. Activated by WNK1, WNK2, WNK3 and WNK4; which promote phosphorylation by mTORC2. Serine/threonine-protein kinase which is involved in the regulation of a wide variety of ion channels, membrane transporters, cellular enzymes, transcription factors, neuronal excitability, cell growth, proliferation, survival, migration and apoptosis. Plays an important role in cellular stress response. Contributes to regulation of renal Na(+) retention, renal K(+) elimination, salt appetite, gastric acid secretion, intestinal Na(+)/H(+) exchange and nutrient transport, insulin-dependent salt sensitivity of blood pressure, salt sensitivity of peripheral glucose uptake, cardiac repolarization and memory consolidation. Up-regulates Na(+) channels: SCNN1A/ENAC, SCN5A and ASIC1/ACCN2, K(+) channels: KCNJ1/ROMK1, KCNA1-5, KCNQ1-5 and KCNE1, epithelial Ca(2+) channels: TRPV5 and TRPV6, chloride channels: BSND, CLCN2 and CFTR, glutamate transporters: SLC1A3/EAAT1, SLC1A2 /EAAT2, SLC1A1/EAAT3, SLC1A6/EAAT4 and SLC1A7/EAAT5, amino acid transporters: SLC1A5/ASCT2, SLC38A1/SN1 and SLC6A19, creatine transporter: SLC6A8, Na(+)/dicarboxylate cotransporter: SLC13A2/NADC1, Na(+)-dependent phosphate cotransporter: SLC34A2/NAPI-2B, glutamate receptor: GRIK2/GLUR6. Up-regulates carriers: SLC9A3/NHE3, SLC12A1/NKCC2, SLC12A3/NCC, SLC5A3/SMIT, SLC2A1/GLUT1, SLC5A1/SGLT1 and SLC15A2/PEPT2. Regulates enzymes: GSK3A/B, PMM2 and Na(+)/K(+) ATPase, and transcription factors: CTNNB1 and nuclear factor NF-kappa-B. Stimulates sodium transport into epithelial cells by enhancing the stability and expression of SCNN1A/ENAC. This is achieved by phosphorylating the NEDD4L ubiquitin E3 ligase, promoting its interaction with 14-3-3 proteins, thereby preventing it from binding to SCNN1A/ENAC and targeting it for degradation. Regulates store-operated Ca(+2) entry (SOCE) by stimulating ORAI1 and STIM1. Regulates KCNJ1/ROMK1 directly via its phosphorylation or indirectly via increased interaction with SLC9A3R2/NHERF2. Phosphorylates MDM2 and activates MDM2-dependent ubiquitination of p53/TP53. Phosphorylates MAPT/TAU and mediates microtubule depolymerization and neurite formation in hippocampal neurons. Phosphorylates SLC2A4/GLUT4 and up-regulates its activity. Phosphorylates APBB1/FE65 and promotes its localization to the nucleus. Phosphorylates MAPK1/ERK2 and activates it by enhancing its interaction with MAP2K1/MEK1 and MAP2K2/MEK2. Phosphorylates FBXW7 and plays an inhibitory role in the NOTCH1 signaling. Phosphorylates FOXO1 resulting in its relocalization from the nucleus to the cytoplasm. Phosphorylates FOXO3, promoting its exit from the nucleus and interference with FOXO3-dependent transcription. Phosphorylates BRAF and MAP3K3/MEKK3 and inhibits their activity. Phosphorylates SLC9A3/NHE3 in response to dexamethasone, resulting in its activation and increased localization at the cell membrane. Phosphorylates CREB1. Necessary for vascular remodeling during angiogenesis. In Mus musculus (Mouse), this protein is Serine/threonine-protein kinase Sgk1 (Sgk1).